The primary structure comprises 142 residues: Neurofilament heavy polypeptide (142 aa).

The IF rod domain maps to 1–142; that stretch reads MRGAVLRLGA…EAAKVNTDAM (142 aa). Residues 26–74 are a coiled coil; that stretch reads IAHVRQRLDDEARQRQEAEAAARALARFAQEAEAARVELQKKAQALQEE.

The protein belongs to the intermediate filament family. In terms of assembly, forms heterodimers with NEFL; which can further hetero-oligomerize (in vitro). Forms heterodimers with INA (in vitro). There are a number of repeats of the tripeptide K-S-P, NFH is phosphorylated on a number of the serines in this motif. It is thought that phosphorylation of NFH results in the formation of interfilament cross bridges that are important in the maintenance of axonal caliber. In terms of processing, phosphorylation seems to play a major role in the functioning of the larger neurofilament polypeptides (NF-M and NF-H), the levels of phosphorylation being altered developmentally and coincidentally with a change in the neurofilament function. Post-translationally, phosphorylated in the head and rod regions by the PKC kinase PKN1, leading to the inhibition of polymerization.

The protein resides in the cytoplasm. The protein localises to the cytoskeleton. Its subcellular location is the cell projection. It localises to the axon. Functionally, neurofilaments usually contain three intermediate filament proteins: NEFL, NEFM, and NEFH which are involved in the maintenance of neuronal caliber. NEFH has an important function in mature axons that is not subserved by the two smaller NF proteins. May additionally cooperate with the neuronal intermediate filament proteins PRPH and INA to form neuronal filamentous networks. This chain is Neurofilament heavy polypeptide (NEFH), found in Sus scrofa (Pig).